The primary structure comprises 208 residues: Histone H1t (208 aa).

Polar residues predominate over residues 1 to 12 (MSETAPAASSTL). The segment at 1–39 (MSETAPAASSTLVPAPVEKPATKRRGKKPGMATARKPRG) is disordered. At serine 9 the chain carries Phosphoserine. Residues 38–111 (RGFSVSKLIP…GASGSFKLSK (74 aa)) form the H15 domain. Arginine 56 bears the Citrulline mark. Positions 93–208 (GVLVQTKGTG…TDLRKAAGRK (116 aa)) are disordered. Residues 121-134 (KGKKSASAKAKKLG) are compositionally biased toward basic residues. Serine 141 is subject to Phosphoserine. Over residues 143 to 154 (KSSKTKVVKKPK) the composition is skewed to basic residues. At threonine 156 the chain carries Phosphothreonine. A phosphoserine mark is found at serine 163, serine 178, and serine 187. A compositionally biased stretch (basic and acidic residues) spans 199-208 (TDLRKAAGRK).

The protein belongs to the histone H1/H5 family. In terms of processing, phosphorylated in early spermatids. Citrullination at Arg-56 (H1R54ci) by PADI4 takes place within the DNA-binding site of H1 and results in its displacement from chromatin and global chromatin decondensation, thereby promoting pluripotency and stem cell maintenance. In terms of tissue distribution, testis-specific. Expressed in pachytene spermatocytes during meiotic prophase I.

It localises to the nucleus. The protein localises to the chromosome. Its function is as follows. Testis-specific histone H1 that forms less compacted chromatin compared to other H1 histone subtypes. Formation of more relaxed chromatin may be required to promote chromatin architecture required for proper chromosome regulation during meiosis, such as homologous recombination. Histones H1 act as linkers that bind to nucleosomes and compact polynucleosomes into a higher-order chromatin configuration. This chain is Histone H1t, found in Rattus norvegicus (Rat).